We begin with the raw amino-acid sequence, 250 residues long: Phosphoribosylaminoimidazole-succinocarboxamide synthase (250 aa).

It belongs to the SAICAR synthetase family.

The catalysed reaction is 5-amino-1-(5-phospho-D-ribosyl)imidazole-4-carboxylate + L-aspartate + ATP = (2S)-2-[5-amino-1-(5-phospho-beta-D-ribosyl)imidazole-4-carboxamido]succinate + ADP + phosphate + 2 H(+). Its pathway is purine metabolism; IMP biosynthesis via de novo pathway; 5-amino-1-(5-phospho-D-ribosyl)imidazole-4-carboxamide from 5-amino-1-(5-phospho-D-ribosyl)imidazole-4-carboxylate: step 1/2. The chain is Phosphoribosylaminoimidazole-succinocarboxamide synthase from Parasynechococcus marenigrum (strain WH8102).